The chain runs to 922 residues: Probable outer membrane protein pmp1 (922 aa).

Positions 1 to 26 (MRFSLCGFPLVFSFTLLSVFDTSLSA) are cleaved as a signal peptide. The Autotransporter domain occupies 620 to 922 (SLQTDRGLWI…NINCGSKFRF (303 aa)).

Belongs to the PMP outer membrane protein family.

The protein localises to the secreted. Its subcellular location is the cell wall. It localises to the cell outer membrane. This Chlamydia pneumoniae (Chlamydophila pneumoniae) protein is Probable outer membrane protein pmp1 (pmp1).